Reading from the N-terminus, the 1458-residue chain is Secretory phospholipase A2 receptor (1458 aa).

A signal peptide spans 1 to 23 (MLLSLLLLLLLGAPRRCTEGAAA). Topologically, residues 24–1393 (ALSPERVLKW…EHPGKGPSHS (1370 aa)) are extracellular. Intrachain disulfides connect C49–C62, C87–C104, C176–C202, C190–C217, C258–C352, C328–C344, C404–C499, C476–C491, C615–C632, C697–C794, C772–C786, C838–C935, C912–C927, C1065–C1085, C1207–C1221, C1278–C1373, and C1350–C1365. The Ricin B-type lectin domain maps to 49-113 (CIQAGKSVLT…CDSTHVSLRW (65 aa)). N91 carries an N-linked (GlcNAc...) asparagine glycan. A Fibronectin type-II domain is found at 171–219 (AHGTPCMFPFQYNHQWHHECTREGRQDDSLWCATTSRYERDEKWGFCPD). C-type lectin domains follow at residues 227-356 (CDAV…KKYL), 374-502 (TDCE…CKKP), 511-645 (SGCQ…KQPV), 660-798 (HPCY…KIPR), 815-939 (LFHQ…KRKT), 954-1098 (GTCP…EKIQ), 1117-1231 (LEYG…AICH), and 1243-1376 (ELCS…CKMK). N-linked (GlcNAc...) asparagine glycosylation is found at N408, N431, and N452. The chain crosses the membrane as a helical span at residues 1394–1416 (IVPLAVALTLVVILAIITLSFYI). Over 1417-1458 (YKQNKGFFRRLAGVGNSYYPTTNFSTIHLEENILISDLEKND) the chain is Cytoplasmic. The Endocytosis signal signature appears at 1432–1438 (NSYYPTT).

As to quaternary structure, interacts with sPLA2-IB/PLA2G1B; this interaction mediates intracellular signaling as well as clearance of extracellular sPLA2-IB/PLA2G1B via endocytotic pathway. Interacts with sPLA2-X/PLA2G10; this interaction mediates sPLA2-X/PLA2G10 clearance and inactivation. The secretory phospholipase A2 receptor form may be produced by the action of metalloproteinases. It contains all extracellular domains and only lacks transmembrane and cytosolic regions. It is however unclear whether this form is produced by proteolytic cleavage as suggested by some experiments, or by alternative splicing. As to expression, lung, skeletal muscle, brain, kidney and heart.

Its subcellular location is the cell membrane. It is found in the secreted. Receptor for secretory phospholipase A2 (sPLA2). Also able to bind to snake PA2-like toxins. Although its precise function remains unclear, binding of sPLA2 to its receptor participates in both positive and negative regulation of sPLA2 functions as well as clearance of sPLA2. Binding of sPLA2-IB/PLA2G1B induces various effects depending on the cell type, such as activation of the mitogen-activated protein kinase (MAPK) cascade to induce cell proliferation, the production of lipid mediators, selective release of arachidonic acid in bone marrow-derived mast cells. In neutrophils, binding of sPLA2-IB/PLA2G1B can activate p38 MAPK to stimulate elastase release and cell adhesion. May be involved in responses in pro-inflammatory cytokine productions during endotoxic shock. Also has endocytic properties and rapidly internalizes sPLA2 ligands, which is particularly important for the clearance of extracellular sPLA2s to protect their potent enzymatic activities. The soluble secretory phospholipase A2 receptor form is circulating and acts as a negative regulator of sPLA2 functions by blocking the biological functions of sPLA2-IB/PLA2G1B and sPLA2-X/PLA2G10. The chain is Secretory phospholipase A2 receptor (PLA2R1) from Oryctolagus cuniculus (Rabbit).